A 152-amino-acid chain; its full sequence is MRCPYCQHPDSDVIDTRKLHNGETIRRRRKCEACGRRFTTYERVETVSITVVKKNGEREPYEREKLMRGVRTACYRRPVPAQALESLANDIEAELMALDEPEVPSSLIGDMVMRRLRTIDDVAYIRFASVYRSFADIGKLREAVDELLEQGR.

The segment at 3 to 34 (CPYCQHPDSDVIDTRKLHNGETIRRRRKCEAC) is a zinc-finger region. Residues 49–139 (ITVVKKNGER…VYRSFADIGK (91 aa)) enclose the ATP-cone domain.

This sequence belongs to the NrdR family. Requires Zn(2+) as cofactor.

Negatively regulates transcription of bacterial ribonucleotide reductase nrd genes and operons by binding to NrdR-boxes. This is Transcriptional repressor NrdR from Roseiflexus castenholzii (strain DSM 13941 / HLO8).